Consider the following 541-residue polypeptide: Arginine--tRNA ligase (541 aa).

The short motif at 119–129 (ANPTGPLHIGH) is the 'HIGH' region element.

Belongs to the class-I aminoacyl-tRNA synthetase family. In terms of assembly, monomer.

It localises to the cytoplasm. It carries out the reaction tRNA(Arg) + L-arginine + ATP = L-arginyl-tRNA(Arg) + AMP + diphosphate. This chain is Arginine--tRNA ligase, found in Helicobacter pylori (strain Shi470).